Reading from the N-terminus, the 763-residue chain is MGLPSLLVEGVIGCTLVGGLVAVGSAALAVRATIGVVEFNRECVRGARRIVSSGGRCLVVQSPYGNPNQGLIRGEDEEIDNVEESTPVELTPLIEVKAEVDGKEVVVSKKRVVNRHLRQRFVRSIAIEAKNHFGGDISPSKANYLSVSKFLTGKCKERHVVPAHTRDCVSAAMVLVFTPDVHEIRMMAGLASDAAYGIKIAMASILNRKGWCWRLMVNPLDRARWWEMWCVVNGFDSNKPVTFPKXGGLFYLNGVETKIRRGGHPSVIEVDGQCPLKERKLYVQNAITTGYEYRVHNHSYANLRRGLLERVFYVERNKELVSCPQPEPGSFKEMGYLRRRFHRVCGNHTRISANDLVDCYQGRKRTIYENAAASLLDRAIERKDGDLKTFIKAEKFNVNLKSDPAPRVIQPRSPRYNVELGRYLKKYEHHAYKALDKIWGGPTVMKGYTTEEVAQHIWSAWNQFQTPVAIGFDMSRFDQHVSVAALEFEHSCYLACFEGDAHLANLLKMQLVNHGVGFASNGMLRYTKEGCRMSGDMNTALGNCLLACLITKHLMKIRSRLINNGDDCVLICERTDIDYVVSNLTTGWSRFGFNCIAEEPVYEMEKIRFCQMAPVFDGAGWLMVRDPLVSMSKDSHSLVHWNNETNAKQWLKSVGMCGLRIAGGVPVVQEFYQKYVETAGNVRENKNITEKSSSGFFMMADRAKRGYSAVSEVCRFSFYQAFGITPDQQIALEGEIRSLTINTNVGPQCEAADSLWILNRKYQ.

One can recognise a RdRp catalytic domain in the interval 466 to 579 (TPVAIGFDMS…LICERTDIDY (114 aa)).

It catalyses the reaction RNA(n) + a ribonucleoside 5'-triphosphate = RNA(n+1) + diphosphate. Its function is as follows. RNA-dependent RNA polymerase that plays an essential role in the virus replication. The protein is RNA-directed RNA polymerase of Carnation mottle virus (CarMV).